Consider the following 223-residue polypeptide: Ras-related protein Rab-21 (223 aa).

An N-acetylalanine modification is found at Ala2. GTP-binding residues include Gly26, Gly29, Lys30, Thr31, Ser32, Asn43, Asp44, His46, Thr48, and Thr49. Mg(2+) is bound at residue Thr31. The Switch 1 signature appears at 41–54; sequence KFNDKHITTLQASF. The Mg(2+) site is built by Thr49 and Asp72. Positions 74–92 match the Switch 2 motif; sequence AGQERFHALGPIYYRDSNG. Residues Gly75, Asn130, Lys131, Asp133, Ala161, and Lys162 each coordinate GTP. S-geranylgeranyl cysteine attachment occurs at residues Cys219 and Cys220. A Cysteine methyl ester modification is found at Cys220. Residues 221 to 223 constitute a propeptide, removed in mature form; the sequence is SSG.

The protein belongs to the small GTPase superfamily. Rab family. In terms of assembly, interacts with the cytoplasmic tail of integrins ITGA1, ITGA2, ITGA5, ITGA6, ITGA11 and ITGB1; this interaction is dependent upon its GDP/GTP cycle. Interacts with ANKRD27. Interacts (active GTP-bound form) with TMED10; the interaction is indirect and regulates TMED10 abundance and localization at the Golgi. Requires Mg(2+) as cofactor.

The protein localises to the endoplasmic reticulum membrane. It localises to the golgi apparatus. The protein resides in the trans-Golgi network. Its subcellular location is the golgi apparatus membrane. It is found in the early endosome membrane. The protein localises to the cytoplasmic vesicle membrane. It localises to the cleavage furrow. The protein resides in the cell projection. Its subcellular location is the neuron projection. It catalyses the reaction GTP + H2O = GDP + phosphate + H(+). Regulated by guanine nucleotide exchange factors (GEFs) including ANKRD27 and RABGEF1, which promote the exchange of bound GDP for free GTP. Regulated by GTPase activating proteins (GAPs) which increase the GTP hydrolysis activity. Inhibited by GDP dissociation inhibitors (GDIs). Its function is as follows. The small GTPases Rab are key regulators of intracellular membrane trafficking, from the formation of transport vesicles to their fusion with membranes. Rabs cycle between an inactive GDP-bound form and an active GTP-bound form that is able to recruit to membranes different sets of downstream effectors directly responsible for vesicle formation, movement, tethering and fusion. RAB21 is involved in membrane trafficking control. Regulates integrin internalization and recycling, but does not influence the traffic of endosomally translocated receptors in general. As a result, may regulate cell adhesion and migration. During the mitosis of adherent cells, controls the endosomal trafficking of integrins which is required for the successful completion of cytokinesis. Involved in neurite growth. Modulates protein levels of the cargo receptors TMED2 and TMED10, and required for appropriate Golgi localization of TMED10. This chain is Ras-related protein Rab-21 (RAB21), found in Canis lupus familiaris (Dog).